Here is a 228-residue protein sequence, read N- to C-terminus: Ribonuclease 3 (228 aa).

An RNase III domain is found at 7 to 136 (LNKLKNEYNI…FNGALFLDQG (130 aa)). E49 provides a ligand contact to Mg(2+). D53 is an active-site residue. The Mg(2+) site is built by D122 and E125. E125 is a catalytic residue. The DRBM domain occupies 162 to 228 (DYKTDLQELL…AAKAALQKFE (67 aa)). A disordered region spans residues 207-228 (GEGHNKKAAEQQAAKAALQKFE). The segment covering 216–228 (EQQAAKAALQKFE) has biased composition (low complexity).

This sequence belongs to the ribonuclease III family. As to quaternary structure, homodimer. It depends on Mg(2+) as a cofactor.

It localises to the cytoplasm. The enzyme catalyses Endonucleolytic cleavage to 5'-phosphomonoester.. Its function is as follows. Digests double-stranded RNA. Involved in the processing of primary rRNA transcript to yield the immediate precursors to the large and small rRNAs (23S and 16S). Processes some mRNAs, and tRNAs when they are encoded in the rRNA operon. Processes pre-crRNA and tracrRNA of type II CRISPR loci if present in the organism. The protein is Ribonuclease 3 of Lactobacillus acidophilus (strain ATCC 700396 / NCK56 / N2 / NCFM).